The primary structure comprises 95 residues: Co-chaperonin GroES (95 aa).

It belongs to the GroES chaperonin family. Heptamer of 7 subunits arranged in a ring. Interacts with the chaperonin GroEL.

The protein localises to the cytoplasm. Together with the chaperonin GroEL, plays an essential role in assisting protein folding. The GroEL-GroES system forms a nano-cage that allows encapsulation of the non-native substrate proteins and provides a physical environment optimized to promote and accelerate protein folding. GroES binds to the apical surface of the GroEL ring, thereby capping the opening of the GroEL channel. In Desulfatibacillum aliphaticivorans, this protein is Co-chaperonin GroES.